Here is a 226-residue protein sequence, read N- to C-terminus: Enolase-phosphatase E1 (226 aa).

The Mg(2+) site is built by Asp-9 and Glu-11. Substrate-binding positions include 115 to 116 (SS) and Lys-160. Asp-185 serves as a coordination point for Mg(2+).

This sequence belongs to the HAD-like hydrolase superfamily. MasA/MtnC family. In terms of assembly, monomer. It depends on Mg(2+) as a cofactor.

It localises to the cytoplasm. The protein localises to the nucleus. The enzyme catalyses 5-methylsulfanyl-2,3-dioxopentyl phosphate + H2O = 1,2-dihydroxy-5-(methylsulfanyl)pent-1-en-3-one + phosphate. The protein operates within amino-acid biosynthesis; L-methionine biosynthesis via salvage pathway; L-methionine from S-methyl-5-thio-alpha-D-ribose 1-phosphate: step 3/6. Its pathway is amino-acid biosynthesis; L-methionine biosynthesis via salvage pathway; L-methionine from S-methyl-5-thio-alpha-D-ribose 1-phosphate: step 4/6. In terms of biological role, bifunctional enzyme that catalyzes the enolization of 2,3-diketo-5-methylthiopentyl-1-phosphate (DK-MTP-1-P) into the intermediate 2-hydroxy-3-keto-5-methylthiopentenyl-1-phosphate (HK-MTPenyl-1-P), which is then dephosphorylated to form the acireductone 1,2-dihydroxy-3-keto-5-methylthiopentene (DHK-MTPene). The sequence is that of Enolase-phosphatase E1 from Zygosaccharomyces rouxii (strain ATCC 2623 / CBS 732 / NBRC 1130 / NCYC 568 / NRRL Y-229).